Here is a 64-residue protein sequence, read N- to C-terminus: MPKMKTHRGAAKRFKKTKNKIKRGSAFRSHILTKKSPKTKRHLRAPHYVSKVDEPRVIELISTY.

The interval 1 to 23 (MPKMKTHRGAAKRFKKTKNKIKR) is disordered.

The protein belongs to the bacterial ribosomal protein bL35 family.

This is Large ribosomal subunit protein bL35 from Nitratiruptor sp. (strain SB155-2).